The chain runs to 142 residues: Putative transcriptional regulatory protein PF0535 (142 aa).

This sequence belongs to the Tfx family.

Its function is as follows. Putative transcriptional regulator. The chain is Putative transcriptional regulatory protein PF0535 from Pyrococcus furiosus (strain ATCC 43587 / DSM 3638 / JCM 8422 / Vc1).